The primary structure comprises 137 residues: S-adenosylmethionine decarboxylase proenzyme (137 aa).

Residue Ser63 is the Schiff-base intermediate with substrate; via pyruvic acid of the active site. The residue at position 63 (Ser63) is a Pyruvic acid (Ser); by autocatalysis. The Proton acceptor; for processing activity role is filled by His68. Catalysis depends on Cys83, which acts as the Proton donor; for catalytic activity.

It belongs to the prokaryotic AdoMetDC family. Type 1 subfamily. Heterotetramer of two alpha and two beta chains arranged as a dimer of alpha/beta heterodimers. Pyruvate is required as a cofactor. Post-translationally, is synthesized initially as an inactive proenzyme. Formation of the active enzyme involves a self-maturation process in which the active site pyruvoyl group is generated from an internal serine residue via an autocatalytic post-translational modification. Two non-identical subunits are generated from the proenzyme in this reaction, and the pyruvate is formed at the N-terminus of the alpha chain, which is derived from the carboxyl end of the proenzyme. The post-translation cleavage follows an unusual pathway, termed non-hydrolytic serinolysis, in which the side chain hydroxyl group of the serine supplies its oxygen atom to form the C-terminus of the beta chain, while the remainder of the serine residue undergoes an oxidative deamination to produce ammonia and the pyruvoyl group blocking the N-terminus of the alpha chain.

The enzyme catalyses S-adenosyl-L-methionine + H(+) = S-adenosyl 3-(methylsulfanyl)propylamine + CO2. Its pathway is amine and polyamine biosynthesis; S-adenosylmethioninamine biosynthesis; S-adenosylmethioninamine from S-adenosyl-L-methionine: step 1/1. Its function is as follows. Catalyzes the decarboxylation of S-adenosylmethionine to S-adenosylmethioninamine (dcAdoMet), the propylamine donor required for the synthesis of the polyamines spermine and spermidine from the diamine putrescine. This is S-adenosylmethionine decarboxylase proenzyme from Fervidobacterium nodosum (strain ATCC 35602 / DSM 5306 / Rt17-B1).